An 81-amino-acid polypeptide reads, in one-letter code: Putative membrane protein insertion efficiency factor (81 aa).

It belongs to the UPF0161 family.

Its subcellular location is the cell inner membrane. Functionally, could be involved in insertion of integral membrane proteins into the membrane. This is Putative membrane protein insertion efficiency factor from Legionella pneumophila subsp. pneumophila (strain Philadelphia 1 / ATCC 33152 / DSM 7513).